We begin with the raw amino-acid sequence, 204 residues long: Urease accessory protein UreG (204 aa).

12–19 contacts GTP; that stretch reads GPVGSGKT.

This sequence belongs to the SIMIBI class G3E GTPase family. UreG subfamily. As to quaternary structure, homodimer. UreD, UreF and UreG form a complex that acts as a GTP-hydrolysis-dependent molecular chaperone, activating the urease apoprotein by helping to assemble the nickel containing metallocenter of UreC. The UreE protein probably delivers the nickel.

The protein localises to the cytoplasm. Its function is as follows. Facilitates the functional incorporation of the urease nickel metallocenter. This process requires GTP hydrolysis, probably effectuated by UreG. This Pseudomonas fluorescens (strain ATCC BAA-477 / NRRL B-23932 / Pf-5) protein is Urease accessory protein UreG.